A 196-amino-acid polypeptide reads, in one-letter code: Putative NADH dehydrogenase/NAD(P)H nitroreductase Rpal_4764 (196 aa).

Belongs to the nitroreductase family. HadB/RutE subfamily. It depends on FMN as a cofactor.

The protein is Putative NADH dehydrogenase/NAD(P)H nitroreductase Rpal_4764 of Rhodopseudomonas palustris (strain TIE-1).